Consider the following 712-residue polypeptide: Diacylglycerol kinase 2 (712 aa).

Phorbol-ester/DAG-type zinc fingers lie at residues 72 to 133 and 145 to 208; these read HHQW…AKDC and RHHW…GDAC. The 142-residue stretch at 338–479 folds into the DAGKc domain; that stretch reads PDARPLLVFI…RWSVKIVEES (142 aa).

Belongs to the eukaryotic diacylglycerol kinase family. Monomer. Expressed in rosette and cauline leaves, flowers, siliques and roots. Highly expressed in young leaves and at lower levels in older leaves. In young seedlings, expressed at the root-shoot junction zone and vascular bundles of the cotyledons. In older plants, expressed in root tip, central cylinder, root hair, leaf mesophyll cells and guard cells, sepals, filaments of the anthers, stigma, valves of young and early adult siliques and hilum of seeds.

Its subcellular location is the endoplasmic reticulum. The catalysed reaction is a 1,2-diacyl-sn-glycerol + ATP = a 1,2-diacyl-sn-glycero-3-phosphate + ADP + H(+). It catalyses the reaction 1-octadecanoyl-2-(5Z,8Z,11Z,14Z-eicosatetraenoyl)-sn-glycerol + ATP = 1-octadecanoyl-2-(5Z,8Z,11Z,14Z-eicosatetraenoyl)-sn-glycero-3-phosphate + ADP + H(+). The enzyme catalyses 1,2-di-(9Z-octadecenoyl)-sn-glycerol + ATP = 1,2-di-(9Z-octadecenoyl)-sn-glycero-3-phosphate + ADP + H(+). Phosphorylates the second messenger diacylglycerol (DAG) to generate phosphatidic acid (PA), another important signaling molecule. PA is required for plant development and responses to abiotic stress and pathogen attack. May be involved in the accumulation of PA during cold stress. Involved in response to freezing stress by modulating the accumulation of PA. Exhibits high specificity for the unsaturated DAG analogs 1-stearoyl-2-arachidonoyl-sn-glycerol (1,2-SAG) and 1,2-dioleoyl-sn-glycerol (1,2-DOG). Exhibits high specificity for 1-palmitoyl, 2-oleoyl-sn-glycerol (1,2 POG), 1-stearoyl, 2-linoleoyl-sn-glycerol (1,2-SLG) and 1-oleoyl, 2-palmitoyl-sn-glycerol (1,2-OPG). Has almost no activity toward 1,2-dioctanoyl-sn-glycerol (1,2-DOCG), 1,2-dipalmitoyl-sn-glycerol (1,2-DPG), 1,2-dimyristoyl-sn-glycerol (1,2-DMG) and 1-oleoyl-2-acetyl-sn-glycerol (1,2-OAG). Functions together with DGK4 in male gametophyte development and biosynthesis of phosphatidylglycerol and phosphatidylinositol in the endoplasmic reticulum (ER). Involved in PA production for pollen grain growth, as well as leaf and root growth. In Arabidopsis thaliana (Mouse-ear cress), this protein is Diacylglycerol kinase 2.